Here is a 395-residue protein sequence, read N- to C-terminus: MAKEKFNRSKPHVNIGTIGHVDHGKTTLTAAITAVLAKKGLSEVKSFDQIDNAPEEKERGITINTAHVEYETETRHYAHVDCPGHADYVKNMVTGAAQMDGAIIVVAATDGPMPQTREHILLARQVNVPKLVVFMNKVDIVDDPEMLELVEMEMRELLDFYQFDGTNTPIIRGSALGGANGDPKWEAKIMELMDAIDNWIPLPQRDIDKSFLMPVEDVFSITGRGTVATGRIETGLVRTGDEVQIIGLDANGKKSVVTGVEMFRKILDEGQAGDNVGLLLRGVDKDEVKRGMVITHPNKVKPHTKVKAEVYILKKEEGGRHTPFHNKYRPQFYVRTLDVTGEITLPEGTEMVMPGDNVTITIELIYPVACNEGLRFAIREGGRTVGAGQITEIIE.

The tr-type G domain occupies K10–Q204. The tract at residues G19 to T26 is G1. G19 to T26 serves as a coordination point for GTP. Residue T26 participates in Mg(2+) binding. The segment at G60 to N64 is G2. Positions D81–G84 are G3. Residues D81–H85 and N136–D139 contribute to the GTP site. Residues N136 to D139 form a G4 region. Residues S174–L176 are G5.

Belongs to the TRAFAC class translation factor GTPase superfamily. Classic translation factor GTPase family. EF-Tu/EF-1A subfamily. As to quaternary structure, monomer.

Its subcellular location is the cytoplasm. The enzyme catalyses GTP + H2O = GDP + phosphate + H(+). Functionally, GTP hydrolase that promotes the GTP-dependent binding of aminoacyl-tRNA to the A-site of ribosomes during protein biosynthesis. The protein is Elongation factor Tu of Azobacteroides pseudotrichonymphae genomovar. CFP2.